The following is a 145-amino-acid chain: Deoxyuridine 5'-triphosphate nucleotidohydrolase (145 aa).

Residues 63–65, Gln76, and 80–82 contribute to the substrate site; these read RSG and TVD.

This sequence belongs to the dUTPase family. It depends on Mg(2+) as a cofactor.

It catalyses the reaction dUTP + H2O = dUMP + diphosphate + H(+). It participates in pyrimidine metabolism; dUMP biosynthesis; dUMP from dCTP (dUTP route): step 2/2. This enzyme is involved in nucleotide metabolism: it produces dUMP, the immediate precursor of thymidine nucleotides and it decreases the intracellular concentration of dUTP so that uracil cannot be incorporated into DNA. In Chlamydia muridarum (strain MoPn / Nigg), this protein is Deoxyuridine 5'-triphosphate nucleotidohydrolase.